Reading from the N-terminus, the 973-residue chain is DENN domain-containing protein C297.05 (973 aa).

Residues 69–79 (AHHNTTGSNSV) are compositionally biased toward polar residues. The interval 69 to 136 (AHHNTTGSNS…YHSRKPYSEP (68 aa)) is disordered. Phosphoserine occurs at positions 134 and 318. Positions 169-427 (ALPLFAATHP…NICCDVPLPP (259 aa)) constitute a uDENN domain. The cDENN domain occupies 449-586 (VNEIPGWNDV…LRSKLQAHLK (138 aa)). Positions 588 to 919 (AAPLHDKFYV…DRCELDLNDP (332 aa)) constitute a dDENN domain. The tract at residues 693 to 713 (RNFSSPPFTRPASPSSSKFRF) is disordered. Phosphoserine is present on serine 726. Positions 729 to 750 (SPYSVPELRSSESNQNKAGSIN) are disordered. A compositionally biased stretch (polar residues) spans 739-750 (SESNQNKAGSIN).

The protein localises to the cytoplasm. It localises to the nucleus. The protein is DENN domain-containing protein C297.05 of Schizosaccharomyces pombe (strain 972 / ATCC 24843) (Fission yeast).